The following is a 406-amino-acid chain: Lysine-specific demethylase 8 (406 aa).

A compositionally biased stretch (basic and acidic residues) spans 143–152 (KAERSEEPFS). The interval 143-162 (KAERSEEPFSKKRKHDCKSE) is disordered. The region spanning 270–406 (DQVPELKEDI…LSFSVSFWWS (137 aa)) is the JmjC domain. H311 and D313 together coordinate Fe cation.

Requires Fe(2+) as cofactor.

It localises to the nucleus. The catalysed reaction is N(6),N(6)-dimethyl-L-lysyl(36)-[histone H3] + 2 2-oxoglutarate + 2 O2 = L-lysyl(36)-[histone H3] + 2 formaldehyde + 2 succinate + 2 CO2. Its function is as follows. Histone demethylase required for G2/M phase cell cycle progression. Specifically demethylates dimethylated 'Lys-36' (H3K36me2) of histone H3, an epigenetic repressive mark, thereby acting as a transcription activator. May play a role in the regulation of the circadian clock. The sequence is that of Lysine-specific demethylase 8 (kdm8) from Danio rerio (Zebrafish).